The primary structure comprises 127 residues: Small ribosomal subunit protein uS12 (127 aa).

At Asp89 the chain carries 3-methylthioaspartic acid. Positions 102–127 are disordered; it reads LDTAGVKDRKQGRSKYGTKRPKEAKK. The segment covering 113–127 has biased composition (basic residues); the sequence is GRSKYGTKRPKEAKK.

It belongs to the universal ribosomal protein uS12 family. As to quaternary structure, part of the 30S ribosomal subunit. Contacts proteins S8 and S17. May interact with IF1 in the 30S initiation complex.

With S4 and S5 plays an important role in translational accuracy. In terms of biological role, interacts with and stabilizes bases of the 16S rRNA that are involved in tRNA selection in the A site and with the mRNA backbone. Located at the interface of the 30S and 50S subunits, it traverses the body of the 30S subunit contacting proteins on the other side and probably holding the rRNA structure together. The combined cluster of proteins S8, S12 and S17 appears to hold together the shoulder and platform of the 30S subunit. In Nostoc punctiforme (strain ATCC 29133 / PCC 73102), this protein is Small ribosomal subunit protein uS12.